We begin with the raw amino-acid sequence, 372 residues long: Cytochrome b (372 aa).

4 helical membrane-spanning segments follow: residues 25 to 45 (FGSM…FLAI), 69 to 90 (WIMQ…YIHI), 105 to 125 (WLSG…GYVL), and 170 to 190 (FFAL…IHIM). Heme b is bound by residues histidine 75 and histidine 89. 2 residues coordinate heme b: histidine 174 and histidine 188. Histidine 193 contributes to the a ubiquinone binding site. The next 4 helical transmembrane spans lie at 218–238 (HKDI…MTLT), 280–300 (LGGT…PFTH), 312–332 (LTQL…WAAT), and 339–358 (FTMI…IMNP).

Belongs to the cytochrome b family. The cytochrome bc1 complex contains 3 respiratory subunits (MT-CYB, CYC1 and UQCRFS1), 2 core proteins (UQCRC1 and UQCRC2) and probably 6 low-molecular weight proteins. Requires heme b as cofactor.

The protein localises to the mitochondrion inner membrane. Component of the ubiquinol-cytochrome c reductase complex (complex III or cytochrome b-c1 complex) that is part of the mitochondrial respiratory chain. The b-c1 complex mediates electron transfer from ubiquinol to cytochrome c. Contributes to the generation of a proton gradient across the mitochondrial membrane that is then used for ATP synthesis. In Lycodon semicarinatus (Ryukyu odd-tooth snake), this protein is Cytochrome b (MT-CYB).